Here is a 435-residue protein sequence, read N- to C-terminus: Serine--tRNA ligase (435 aa).

234–236 (TAE) contributes to the L-serine binding site. An ATP-binding site is contributed by 265 to 267 (RRE). E288 serves as a coordination point for L-serine. Residue 352–355 (EISS) participates in ATP binding. S388 provides a ligand contact to L-serine.

This sequence belongs to the class-II aminoacyl-tRNA synthetase family. Type-1 seryl-tRNA synthetase subfamily. Homodimer. The tRNA molecule binds across the dimer.

Its subcellular location is the cytoplasm. It catalyses the reaction tRNA(Ser) + L-serine + ATP = L-seryl-tRNA(Ser) + AMP + diphosphate + H(+). The enzyme catalyses tRNA(Sec) + L-serine + ATP = L-seryl-tRNA(Sec) + AMP + diphosphate + H(+). The protein operates within aminoacyl-tRNA biosynthesis; selenocysteinyl-tRNA(Sec) biosynthesis; L-seryl-tRNA(Sec) from L-serine and tRNA(Sec): step 1/1. Catalyzes the attachment of serine to tRNA(Ser). Is also able to aminoacylate tRNA(Sec) with serine, to form the misacylated tRNA L-seryl-tRNA(Sec), which will be further converted into selenocysteinyl-tRNA(Sec). The protein is Serine--tRNA ligase of Synechococcus sp. (strain JA-2-3B'a(2-13)) (Cyanobacteria bacterium Yellowstone B-Prime).